A 333-amino-acid chain; its full sequence is Protoheme IX farnesyltransferase (333 aa).

7 helical membrane passes run 64 to 84, 110 to 130, 133 to 153, 161 to 181, 189 to 209, 246 to 266, and 287 to 307; these read LICT…LNCL, TVFL…VSGV, LAAG…TVIL, IVFG…AATG, WLFG…AILL, IMGV…LLPF, and AKSL…LLLI.

It belongs to the UbiA prenyltransferase family. Protoheme IX farnesyltransferase subfamily.

The protein localises to the cell inner membrane. The enzyme catalyses heme b + (2E,6E)-farnesyl diphosphate + H2O = Fe(II)-heme o + diphosphate. The protein operates within porphyrin-containing compound metabolism; heme O biosynthesis; heme O from protoheme: step 1/1. Its function is as follows. Converts heme B (protoheme IX) to heme O by substitution of the vinyl group on carbon 2 of heme B porphyrin ring with a hydroxyethyl farnesyl side group. The polypeptide is Protoheme IX farnesyltransferase (Prochlorococcus marinus (strain AS9601)).